Here is a 409-residue protein sequence, read N- to C-terminus: Palmitoyltransferase ZDHHC23 (409 aa).

The Cytoplasmic segment spans residues 1-87 (MTQKGSMKPV…RIPWLRGAKK (87 aa)). A helical membrane pass occupies residues 88 to 106 (VNISIIPPLVLLPVFLHVA). Residues 107-109 (SWH) are Lumenal-facing. Residues 110–132 (FLLGVVVLTSLPVLALWYYYLTH) traverse the membrane as a helical segment. Residues 133–136 (RRKE) lie on the Cytoplasmic side of the membrane. The chain crosses the membrane as a helical span at residues 137-157 (QTLFFLSLGLFSLGYMYYVFL). At 158-165 (QEVVPKGR) the chain is on the lumenal side. A helical transmembrane segment spans residues 166–186 (VGPVQLAVLTCGLFLILLALH). Residues 187 to 302 (RAKKNPGYLS…NSCVGESNHQ (116 aa)) lie on the Cytoplasmic side of the membrane. The disordered stretch occupies residues 215–255 (RKGQEKTKGFPGADMSGSLNNRTTKDDPKGSSKMPAGSPTK). Residues 259-309 (DWCAKCQLVRPARAWHCRICGICVRRMDHHCVWINSCVGESNHQAFILALL) form the DHHC domain. The S-palmitoyl cysteine intermediate role is filled by C289. Residues 303–323 (AFILALLIFLLTSVYGITLTL) traverse the membrane as a helical segment. Residues 324–331 (DTICRDRS) are Lumenal-facing. A helical transmembrane segment spans residues 332 to 352 (VFTALFYCPGVYANYSSALSF). A topological domain (cytoplasmic) is located at residue T353. Residues 354–374 (CVWYSVIITAGMAYIFLIQLI) form a helical membrane-spanning segment. The Lumenal segment spans residues 375–409 (NISYNVTEREVQQALRQKTGRRLLCGLIVDTGLLG).

The protein belongs to the DHHC palmitoyltransferase family. In terms of assembly, interacts with NOS1.

It is found in the golgi apparatus membrane. The protein localises to the golgi apparatus. The protein resides in the trans-Golgi network membrane. It catalyses the reaction L-cysteinyl-[protein] + hexadecanoyl-CoA = S-hexadecanoyl-L-cysteinyl-[protein] + CoA. Its function is as follows. Palmitoyltransferase that could catalyze the addition of palmitate onto various protein substrates and be involved in a variety of cellular processes. Palmitoyltransferase that mediates palmitoylation of KCNMA1, regulating localization of KCNMA1 to the plasma membrane. May be involved in NOS1 regulation and targeting to the synaptic membrane. The sequence is that of Palmitoyltransferase ZDHHC23 from Homo sapiens (Human).